The primary structure comprises 302 residues: Sulfate adenylyltransferase subunit 2 (302 aa).

Belongs to the PAPS reductase family. CysD subfamily. As to quaternary structure, heterodimer composed of CysD, the smaller subunit, and CysN.

It catalyses the reaction sulfate + ATP + H(+) = adenosine 5'-phosphosulfate + diphosphate. It participates in sulfur metabolism; hydrogen sulfide biosynthesis; sulfite from sulfate: step 1/3. Functionally, with CysN forms the ATP sulfurylase (ATPS) that catalyzes the adenylation of sulfate producing adenosine 5'-phosphosulfate (APS) and diphosphate, the first enzymatic step in sulfur assimilation pathway. APS synthesis involves the formation of a high-energy phosphoric-sulfuric acid anhydride bond driven by GTP hydrolysis by CysN coupled to ATP hydrolysis by CysD. The chain is Sulfate adenylyltransferase subunit 2 from Yersinia pestis bv. Antiqua (strain Nepal516).